Here is a 228-residue protein sequence, read N- to C-terminus: Ribose-5-phosphate isomerase A (228 aa).

Substrate is bound by residues 28 to 31 (TGST), 84 to 87 (DGAD), and 97 to 100 (KGGG). Glu-106 (proton acceptor) is an active-site residue. Residue Lys-124 participates in substrate binding.

This sequence belongs to the ribose 5-phosphate isomerase family. In terms of assembly, homodimer.

It catalyses the reaction aldehydo-D-ribose 5-phosphate = D-ribulose 5-phosphate. It functions in the pathway carbohydrate degradation; pentose phosphate pathway; D-ribose 5-phosphate from D-ribulose 5-phosphate (non-oxidative stage): step 1/1. In terms of biological role, catalyzes the reversible conversion of ribose-5-phosphate to ribulose 5-phosphate. The chain is Ribose-5-phosphate isomerase A from Levilactobacillus brevis (strain ATCC 367 / BCRC 12310 / CIP 105137 / JCM 1170 / LMG 11437 / NCIMB 947 / NCTC 947) (Lactobacillus brevis).